A 183-amino-acid chain; its full sequence is Peptidyl-tRNA hydrolase (183 aa).

TRNA is bound at residue Tyr14. The active-site Proton acceptor is the His19. 2 residues coordinate tRNA: Tyr60 and Asn62.

This sequence belongs to the PTH family. Monomer.

Its subcellular location is the cytoplasm. The catalysed reaction is an N-acyl-L-alpha-aminoacyl-tRNA + H2O = an N-acyl-L-amino acid + a tRNA + H(+). Its function is as follows. Hydrolyzes ribosome-free peptidyl-tRNAs (with 1 or more amino acids incorporated), which drop off the ribosome during protein synthesis, or as a result of ribosome stalling. Functionally, catalyzes the release of premature peptidyl moieties from peptidyl-tRNA molecules trapped in stalled 50S ribosomal subunits, and thus maintains levels of free tRNAs and 50S ribosomes. The polypeptide is Peptidyl-tRNA hydrolase (Mycoplasmoides gallisepticum (strain R(low / passage 15 / clone 2)) (Mycoplasma gallisepticum)).